A 200-amino-acid chain; its full sequence is Anthranilate synthase component 2, pyocyanine specific (200 aa).

A Glutamine amidotransferase type-1 domain is found at 2–195 (RITLLDNFDS…LLWCGALAVR (194 aa)). 56–58 (GPG) is an L-glutamine binding site. The Nucleophile; for GATase activity role is filled by cysteine 83. L-glutamine contacts are provided by residues glutamine 87 and 133–134 (SL). Residues histidine 169 and glutamate 171 each act as for GATase activity in the active site.

Heterotetramer consisting of two non-identical subunits: a beta subunit (PhnB) and a large alpha subunit (PhnA).

It catalyses the reaction chorismate + L-glutamine = anthranilate + pyruvate + L-glutamate + H(+). It participates in secondary metabolite biosynthesis; pyocyanine biosynthesis. Functionally, part of a heterotetrameric complex that catalyzes the two-step biosynthesis of anthranilate, a precursor for Pseudomonas quinolone signal (2-heptyl-3-hydroxy-4-quinolone; PQS) production which is required to induce the genes for the biosynthesis of the virulence factor pyocyanine (PCN), a characteristic blue-green phenazine pigment produced by P.aeruginosa. In the first step, the glutamine-binding beta subunit (PhnB) of anthranilate synthase (AS) provides the glutamine amidotransferase activity which generates ammonia as a substrate that, along with chorismate, is used in the second step, catalyzed by the large alpha subunit of AS (PhnA) to produce anthranilate. The sequence is that of Anthranilate synthase component 2, pyocyanine specific from Pseudomonas aeruginosa (strain ATCC 15692 / DSM 22644 / CIP 104116 / JCM 14847 / LMG 12228 / 1C / PRS 101 / PAO1).